The sequence spans 445 residues: Dolichyl-diphosphooligosaccharide--protein glycosyltransferase 48 kDa subunit (445 aa).

The signal sequence occupies residues 1 to 32 (MRRRRKMEAGAAARAWSLLWLLLPLLGPVCAS). The Lumenal portion of the chain corresponds to 33–415 (GPRTLVLLDN…QYERFIPSAY (383 aa)). Residues 416–436 (PYYASAFSMMLGLFIFSTVFL) traverse the membrane as a helical segment. Residues 437 to 445 (HMKEKEKSD) are Cytoplasmic-facing.

The protein belongs to the DDOST 48 kDa subunit family. In terms of assembly, component of the oligosaccharyltransferase (OST) complex. OST exists in two different complex forms which contain common core subunits RPN1, RPN2, OST48, OST4, DAD1 and TMEM258, either STT3A or STT3B as catalytic subunits, and form-specific accessory subunits. STT3A complex assembly occurs through the formation of 3 subcomplexes. Subcomplex 1 contains RPN1 and TMEM258, subcomplex 2 contains the STT3A-specific subunits STT3A, DC2/OSTC, and KCP2 as well as the core subunit OST4, and subcomplex 3 contains RPN2, DAD1, and OST48. The STT3A complex can form stable complexes with the Sec61 complex or with both the Sec61 and TRAP complexes. Interacts with SMIM22.

The protein resides in the endoplasmic reticulum. It is found in the endoplasmic reticulum membrane. Its pathway is protein modification; protein glycosylation. In terms of biological role, subunit of the oligosaccharyl transferase (OST) complex that catalyzes the initial transfer of a defined glycan (Glc(3)Man(9)GlcNAc(2) in eukaryotes) from the lipid carrier dolichol-pyrophosphate to an asparagine residue within an Asn-X-Ser/Thr consensus motif in nascent polypeptide chains, the first step in protein N-glycosylation. N-glycosylation occurs cotranslationally and the complex associates with the Sec61 complex at the channel-forming translocon complex that mediates protein translocation across the endoplasmic reticulum (ER). All subunits are required for a maximal enzyme activity. Required for the assembly of both SST3A- and SS3B-containing OST complexes. This Canis lupus familiaris (Dog) protein is Dolichyl-diphosphooligosaccharide--protein glycosyltransferase 48 kDa subunit.